We begin with the raw amino-acid sequence, 144 residues long: Small ribosomal subunit protein eS12z (144 aa).

Ser2 carries the post-translational modification N-acetylserine.

Belongs to the eukaryotic ribosomal protein eS12 family.

In Arabidopsis thaliana (Mouse-ear cress), this protein is Small ribosomal subunit protein eS12z (RPS12A).